A 125-amino-acid polypeptide reads, in one-letter code: Cu-Zn superoxide dismutase-like protein (125 aa).

An intrachain disulfide couples C52 to C102.

The protein belongs to the Cu-Zn superoxide dismutase family.

The protein resides in the host cytoplasm. Virion protein with no enzymatic activity. The polypeptide is Cu-Zn superoxide dismutase-like protein (Bos taurus (Bovine)).